A 340-amino-acid chain; its full sequence is GTPase Obg (340 aa).

Residues 1-158 (MSFIDEAKIY…KHIILKLKII (158 aa)) form the Obg domain. The OBG-type G domain occupies 159-325 (SDVGIIGLPN…LSTLIKQIHK (167 aa)). GTP is bound by residues 165–172 (GLPNAGKS), 190–194 (FTTLE), 211–214 (DIPG), 278–281 (NKSD), and 306–308 (SSI). The Mg(2+) site is built by serine 172 and threonine 192.

This sequence belongs to the TRAFAC class OBG-HflX-like GTPase superfamily. OBG GTPase family. Monomer. The cofactor is Mg(2+).

The protein resides in the cytoplasm. An essential GTPase which binds GTP, GDP and possibly (p)ppGpp with moderate affinity, with high nucleotide exchange rates and a fairly low GTP hydrolysis rate. Plays a role in control of the cell cycle, stress response, ribosome biogenesis and in those bacteria that undergo differentiation, in morphogenesis control. In Ehrlichia canis (strain Jake), this protein is GTPase Obg.